The following is a 227-amino-acid chain: Ribose-5-phosphate isomerase A (227 aa).

Residues 28-31 (TGST), 85-88 (DGAD), and 98-101 (KGGG) each bind substrate. Residue Glu107 is the Proton acceptor of the active site. Lys125 lines the substrate pocket.

This sequence belongs to the ribose 5-phosphate isomerase family. Homodimer.

It carries out the reaction aldehydo-D-ribose 5-phosphate = D-ribulose 5-phosphate. The protein operates within carbohydrate degradation; pentose phosphate pathway; D-ribose 5-phosphate from D-ribulose 5-phosphate (non-oxidative stage): step 1/1. In terms of biological role, catalyzes the reversible conversion of ribose-5-phosphate to ribulose 5-phosphate. The sequence is that of Ribose-5-phosphate isomerase A from Limosilactobacillus reuteri (strain DSM 20016) (Lactobacillus reuteri).